Consider the following 328-residue polypeptide: Transcription initiation factor TFIID subunit 8 (328 aa).

The Histone-fold domain maps to arginine 16 to glycine 83. The interval asparagine 229–alanine 309 is disordered. Serine 236, serine 245, and serine 255 each carry phosphoserine. Residues aspartate 239–aspartate 251 are compositionally biased toward acidic residues. Residues glycine 252–isoleucine 264 are compositionally biased toward basic and acidic residues. Polar residues predominate over residues asparagine 296–alanine 309.

Belongs to the TAF8 family. Belongs to the TFIID complex which is composed of TATA binding protein (Tbp) and a number of TBP-associated factors (TAFs). Histone fold interacts with N-terminus of Taf10b.

It localises to the nucleus. Functionally, TFIID is a multimeric protein complex that plays a central role in mediating promoter responses to various activators and repressors. The sequence is that of Transcription initiation factor TFIID subunit 8 from Drosophila melanogaster (Fruit fly).